We begin with the raw amino-acid sequence, 115 residues long: U3-lycotoxin-Ls1c (115 aa).

An N-terminal signal peptide occupies residues 1–20 (MKFVLLFGVLLVTLFSYSSA). A propeptide spanning residues 21-44 (EMLDDFDQADEDELLSLIEKEEAR) is cleaved from the precursor. Intrachain disulfides connect Cys48–Cys63, Cys55–Cys72, Cys62–Cys87, and Cys74–Cys85.

This sequence belongs to the neurotoxin 19 (CSTX) family. 01 subfamily. Expressed by the venom gland.

The protein localises to the secreted. The chain is U3-lycotoxin-Ls1c from Lycosa singoriensis (Wolf spider).